The primary structure comprises 188 residues: MRVLGVDPGLTRRGIGVVEGVAGRPLTMIGVGVVRTPADADLGHRLVAVEQGIEQWLDEHRPEFVAVERVFSQHNVRTVMGTAQASAVAILCASRRGIPVALHTPSEVKAAVTGSGRADKAQVGAMVTRLLRLAAPPKPADAADALALAICHIWRAPAQNRLQQAVALHTAQGPRRPHKLHPSKGRPA.

Active-site residues include aspartate 7, glutamate 68, and aspartate 141. Mg(2+)-binding residues include aspartate 7, glutamate 68, and aspartate 141.

The protein belongs to the RuvC family. In terms of assembly, homodimer which binds Holliday junction (HJ) DNA. The HJ becomes 2-fold symmetrical on binding to RuvC with unstacked arms; it has a different conformation from HJ DNA in complex with RuvA. In the full resolvosome a probable DNA-RuvA(4)-RuvB(12)-RuvC(2) complex forms which resolves the HJ. Requires Mg(2+) as cofactor.

The protein localises to the cytoplasm. The enzyme catalyses Endonucleolytic cleavage at a junction such as a reciprocal single-stranded crossover between two homologous DNA duplexes (Holliday junction).. In terms of biological role, the RuvA-RuvB-RuvC complex processes Holliday junction (HJ) DNA during genetic recombination and DNA repair. Endonuclease that resolves HJ intermediates. Cleaves cruciform DNA by making single-stranded nicks across the HJ at symmetrical positions within the homologous arms, yielding a 5'-phosphate and a 3'-hydroxyl group; requires a central core of homology in the junction. The consensus cleavage sequence is 5'-(A/T)TT(C/G)-3'. Cleavage occurs on the 3'-side of the TT dinucleotide at the point of strand exchange. HJ branch migration catalyzed by RuvA-RuvB allows RuvC to scan DNA until it finds its consensus sequence, where it cleaves and resolves the cruciform DNA. This chain is Crossover junction endodeoxyribonuclease RuvC, found in Streptomyces coelicolor (strain ATCC BAA-471 / A3(2) / M145).